The following is a 508-amino-acid chain: DNA-directed RNA polymerase subunit Rpo1C (508 aa).

The unknown stretch occupies residues 1–123 (MIIWKDTAKN…REKYEYEKKV (123 aa)). The segment at 124–508 (SSQVLDVIAE…IYKGYPKTKK (385 aa)) is DNA-directed RNA polymerase subunit Rpo1C.

Belongs to the RNA polymerase beta' chain family. Part of the RNA polymerase complex.

The protein localises to the cytoplasm. It catalyses the reaction RNA(n) + a ribonucleoside 5'-triphosphate = RNA(n+1) + diphosphate. DNA-dependent RNA polymerase (RNAP) catalyzes the transcription of DNA into RNA using the four ribonucleoside triphosphates as substrates. Forms part of the jaw domain. The chain is DNA-directed RNA polymerase subunit Rpo1C from Thermoplasma volcanium (strain ATCC 51530 / DSM 4299 / JCM 9571 / NBRC 15438 / GSS1).